Consider the following 270-residue polypeptide: Glucosamine-6-phosphate deaminase (270 aa).

Residue aspartate 68 is the Proton acceptor; for enolization step of the active site. Aspartate 145 (for ring-opening step) is an active-site residue. Histidine 147 serves as the catalytic Proton acceptor; for ring-opening step. Glutamate 152 serves as the catalytic For ring-opening step.

The protein belongs to the glucosamine/galactosamine-6-phosphate isomerase family. NagB subfamily.

It catalyses the reaction alpha-D-glucosamine 6-phosphate + H2O = beta-D-fructose 6-phosphate + NH4(+). Its pathway is amino-sugar metabolism; N-acetylneuraminate degradation; D-fructose 6-phosphate from N-acetylneuraminate: step 5/5. Functionally, catalyzes the reversible isomerization-deamination of glucosamine 6-phosphate (GlcN6P) to form fructose 6-phosphate (Fru6P) and ammonium ion. The protein is Glucosamine-6-phosphate deaminase of Bifidobacterium longum (strain DJO10A).